A 396-amino-acid chain; its full sequence is Calsequestrin-1 (396 aa).

Residues 1 to 34 form the signal peptide; the sequence is MSATDRMGPRAVPGLRLALLLLLVLGTPKSGVQG. Tyr-43 carries the post-translational modification Phosphotyrosine. Position 81 is a phosphoserine (Ser-81). Thr-124 carries the phosphothreonine modification. Ser-216 is subject to Phosphoserine. Residue Asn-350 is glycosylated (N-linked (GlcNAc...) asparagine).

This sequence belongs to the calsequestrin family. As to quaternary structure, monomer; increases in response to a depletion of intracellular calcium. Homodimer. Homotetramer and homopolymer. Can form linear homooligomers. Ca(2+) ions promote oligomerization. Interacts (via C-terminal end and preferentially with the monomeric form) with STIM1; this interaction increases in response to a depletion of intracellular calcium, decreases both STIM1 aggregation and clustering, interaction of STIM1 with ORAI1 and store-operated Ca(2+) entry (SOCE) activity. Interacts with ASPH and TRDN. Post-translationally, N-glycosylated. Expressed in myoblasts (at protein level).

The protein localises to the endoplasmic reticulum. It is found in the sarcoplasmic reticulum. The protein resides in the sarcoplasmic reticulum lumen. Its subcellular location is the sarcoplasmic reticulum membrane. It localises to the mitochondrion matrix. In terms of biological role, calsequestrin is a high-capacity, moderate affinity, calcium-binding protein and thus acts as an internal calcium store in muscle. Calcium ions are bound by clusters of acidic residues at the protein surface, often at the interface between subunits. Can bind around 80 Ca(2+) ions. Regulates the release of lumenal Ca(2+) via the calcium release channel RYR1; this plays an important role in triggering muscle contraction. Negatively regulates store-operated Ca(2+) entry (SOCE) activity. The chain is Calsequestrin-1 (CASQ1) from Homo sapiens (Human).